The chain runs to 148 residues: Large ribosomal subunit protein bL9 (148 aa).

The protein belongs to the bacterial ribosomal protein bL9 family.

Its function is as follows. Binds to the 23S rRNA. The chain is Large ribosomal subunit protein bL9 from Thermus thermophilus.